A 284-amino-acid chain; its full sequence is D-tagatose-1,6-bisphosphate aldolase subunit GatY (284 aa).

Asp-82 (proton donor) is an active-site residue. Residues His-83 and His-180 each contribute to the Zn(2+) site. Gly-181 contributes to the dihydroxyacetone phosphate binding site. A Zn(2+)-binding site is contributed by His-208. Residues 209-211 (GAS) and 230-233 (NVAT) each bind dihydroxyacetone phosphate.

Belongs to the class II fructose-bisphosphate aldolase family. TagBP aldolase GatY subfamily. Forms a complex with GatZ. Zn(2+) serves as cofactor.

The catalysed reaction is D-tagatofuranose 1,6-bisphosphate = D-glyceraldehyde 3-phosphate + dihydroxyacetone phosphate. The protein operates within carbohydrate metabolism; D-tagatose 6-phosphate degradation; D-glyceraldehyde 3-phosphate and glycerone phosphate from D-tagatose 6-phosphate: step 2/2. Its function is as follows. Catalytic subunit of the tagatose-1,6-bisphosphate aldolase GatYZ, which catalyzes the reversible aldol condensation of dihydroxyacetone phosphate (DHAP or glycerone-phosphate) with glyceraldehyde 3-phosphate (G3P) to produce tagatose 1,6-bisphosphate (TBP). Requires GatZ subunit for full activity and stability. Is involved in the catabolism of galactitol. This Escherichia coli O7:K1 (strain IAI39 / ExPEC) protein is D-tagatose-1,6-bisphosphate aldolase subunit GatY.